A 221-amino-acid chain; its full sequence is Large ribosomal subunit protein uL4 (221 aa).

The disordered stretch occupies residues 44-102; the sequence is AARQGTHKVKRRGEVRGGGKKPYRQKGTGRARQGSTRAPQFAGGGVVHGPTPRDYSQRT. Positions 61 to 72 are enriched in basic residues; the sequence is GGKKPYRQKGTG.

The protein belongs to the universal ribosomal protein uL4 family. In terms of assembly, part of the 50S ribosomal subunit.

Its function is as follows. One of the primary rRNA binding proteins, this protein initially binds near the 5'-end of the 23S rRNA. It is important during the early stages of 50S assembly. It makes multiple contacts with different domains of the 23S rRNA in the assembled 50S subunit and ribosome. Functionally, forms part of the polypeptide exit tunnel. This chain is Large ribosomal subunit protein uL4, found in Streptomyces avermitilis (strain ATCC 31267 / DSM 46492 / JCM 5070 / NBRC 14893 / NCIMB 12804 / NRRL 8165 / MA-4680).